Reading from the N-terminus, the 139-residue chain is Drosulfakinins (139 aa).

Residues 1 to 35 (MGHRGMGCAHFATMAMPLWALTFYLLVVLPVPSQT) form the signal peptide. Positions 36–71 (ASVEVGKEERRLQDLDPKMGSEAGNTDGLSLARFGS) are excised as a propeptide. Phe80 is modified (phenylalanine amide). Positions 81-109 (GHRVPIISRPVIPIELDLLMDNEDDRTMS) are excised as a propeptide. Tyr115 carries the post-translational modification Sulfotyrosine. The residue at position 120 (Phe120) is a Phenylalanine amide. A Sulfotyrosine modification is found at Tyr132. Phenylalanine amide is present on Phe137.

The protein belongs to the gastrin/cholecystokinin family.

It localises to the secreted. Drosulfakinin-0 (DSK 0) plays diverse biological roles including regulating gut muscle contraction in adults but not in larvae. The chain is Drosulfakinins from Drosophila pseudoobscura pseudoobscura (Fruit fly).